A 116-amino-acid polypeptide reads, in one-letter code: Outer membrane protein assembly factor BamE (116 aa).

The N-terminal stretch at 1-22 (MITMRCKMLTAAAVMLAMLTAG) is a signal peptide. Cysteine 23 is lipidated: N-palmitoyl cysteine. The S-diacylglycerol cysteine moiety is linked to residue cysteine 23.

The protein belongs to the BamE family. As to quaternary structure, part of the Bam complex, which is composed of the outer membrane protein BamA, and four lipoproteins BamB, BamC, BamD and BamE.

The protein resides in the cell outer membrane. Functionally, part of the outer membrane protein assembly complex, which is involved in assembly and insertion of beta-barrel proteins into the outer membrane. This is Outer membrane protein assembly factor BamE from Yersinia pestis.